The chain runs to 337 residues: Oligopeptide transport ATP-binding protein OppD (337 aa).

One can recognise an ABC transporter domain in the interval 20–269; that stretch reads LNVKDLRVTF…PVHPYSIGLL (250 aa). 56–63 contacts ATP; that stretch reads GESGSGKS.

The protein belongs to the ABC transporter superfamily. The complex is composed of two ATP-binding proteins (OppD and OppF), two transmembrane proteins (OppB and OppC) and a solute-binding protein (OppA or MppA).

It is found in the cell inner membrane. It catalyses the reaction a [peptide](out) + ATP + H2O = a [peptide](in) + ADP + phosphate + H(+). The enzyme catalyses L-alanyl-gamma-D-glutamyl-meso-2,6-diaminopimelate(out) + ATP + H2O = L-alanyl-gamma-D-glutamyl-meso-2,6-diaminopimelate(in) + ADP + phosphate + H(+). Its function is as follows. Part of the ABC transporter complex OppABCDF involved in the uptake of oligopeptides and of the ABC transporter complex MppA-OppBCDF involved in the uptake of the cell wall murein tripeptide L-alanyl-gamma-D-glutamyl-meso-diaminopimelate. Probably responsible for energy coupling to the transport system. Plays an important nutritional role and is involved in the recycling of cell wall peptides. The sequence is that of Oligopeptide transport ATP-binding protein OppD (oppD) from Escherichia coli (strain K12).